Here is a 223-residue protein sequence, read N- to C-terminus: Small ribosomal subunit protein uS5 (223 aa).

Positions 1–48 (MPGRQRRDGGSGPAGQNGPNSGDNSNARGDNRGGGRDRRDGGRGGNAA) are disordered. Residues 29-42 (GDNRGGGRDRRDGG) show a composition bias toward basic and acidic residues. The S5 DRBM domain occupies 53–116 (FIERVVTINR…EEARKSFFRV (64 aa)).

Belongs to the universal ribosomal protein uS5 family. As to quaternary structure, part of the 30S ribosomal subunit. Contacts proteins S4 and S8.

In terms of biological role, with S4 and S12 plays an important role in translational accuracy. Located at the back of the 30S subunit body where it stabilizes the conformation of the head with respect to the body. This Rhodococcus erythropolis (strain PR4 / NBRC 100887) protein is Small ribosomal subunit protein uS5.